A 729-amino-acid chain; its full sequence is Monosaccharide-sensing protein 3 (729 aa).

Helical transmembrane passes span 5–25 (VLVALAAAIGNMLQGWDNATI), 46–66 (GLIVAMSLIGATLITTFSGPV), 81–101 (VLYFLSSIVMFWSPNVYVLLF), 104–124 (LLDGFGIGLAVTLVPIYISET), 135–155 (TFPQFCGSGGMFLSYCLVFGM), and 165–185 (LMLGVLSIPSIAYFVLAAFFL). Positions 337-372 (QESQWDPERNNEDSSDQDENLNSPLLSPQTTEPDDY) are disordered. The span at 356–367 (NLNSPLLSPQTT) shows a compositional bias: polar residues. Residue S446 is modified to Phosphoserine. The next 6 membrane-spanning stretches (helical) occupy residues 511–531 (ALMVGVGLQILQQFAGINGVM), 557–577 (ASLLISALTTLLMLPCILVSM), 581–601 (MLSTIPILILSLVTLVIGSLV), 610–630 (LISTASVTVYLSCFVMGFGAI), 650–670 (ICALTFWICDIIVTYTLPVML), and 673–693 (IGIAGVFGIYAIVCAVAWVFV).

Belongs to the major facilitator superfamily. Sugar transporter (TC 2.A.1.1) family. Weakly expressed.

The protein localises to the vacuole membrane. It carries out the reaction D-glucose(out) + H(+)(in) = D-glucose(in) + H(+)(out). It catalyses the reaction sucrose(out) + H(+)(in) = sucrose(in) + H(+)(out). Sugar proton-coupled antiporter which contributes to vacuolar sugar import (e.g. monosaccharides including glucose,sucrose and fructose), particularly during stress responses (e.g. in response to cold). This is Monosaccharide-sensing protein 3 from Arabidopsis thaliana (Mouse-ear cress).